The primary structure comprises 104 residues: Protein SMALL AUXIN UP-REGULATED RNA 12 (104 aa).

The protein belongs to the ARG7 family. Expressed in flowers and etiolated hypocotyls.

The protein resides in the cell membrane. Provide a mechanistic link between auxin and plasma membrane H(+)-ATPases (PM H(+)-ATPases, e.g. AHA1 and AHA2), and triggers PM H(+)-ATPases activity by promoting phosphorylation of their C-terminal autoinhibitory domain as a result of PP2C-D subfamily of type 2C phosphatases inhibition, thus leading to the acidification of the apoplast and the facilitation of solutes and water uptake to drive cell expansion. Triggers plant growth probably by promoting cell elongation. Regulates branch angles and bending. This chain is Protein SMALL AUXIN UP-REGULATED RNA 12, found in Arabidopsis thaliana (Mouse-ear cress).